A 142-amino-acid chain; its full sequence is Ctenidin-3 (142 aa).

Residues 1-19 (MKHLIPLIVMASVVLAVYA) form the signal peptide. Tyr139 is subject to Tyrosine amide.

In terms of tissue distribution, expressed in hemocytes (at protein level).

It localises to the secreted. Its function is as follows. Antimicrobial protein with bacteriostatic activity against the Gram-negative bacterium E.coli, and very weak activity against the Gram-positive bacterium S.aureus. Lacks activity against the yeast C.albicans. In Cupiennius salei (American wandering spider), this protein is Ctenidin-3.